Here is a 1436-residue protein sequence, read N- to C-terminus: Pleiotropic drug resistance protein 1 (1436 aa).

An ABC transporter 1 domain is found at 165-438; that stretch reads LDSIHILPSK…FESMGFKCPE (274 aa). An ATP-binding site is contributed by 198–205; it reads GPPGSGKT. An ABC transmembrane type-2 1 domain is found at 516–729; that stretch reads QLLKVCTERE…SVNAILVNEF (214 aa). 7 helical membrane-spanning segments follow: residues 534–554, 567–587, 622–642, 653–673, 679–699, 707–727, and 764–784; these read FVYL…MTIF, GGIY…NGLS, IPVT…VMGF, FLLL…IAAV, VAST…GFIL, WWIW…ILVN, and IGVG…SVAL. A disordered region spans residues 796–826; the sequence is TISDESENNESESSPQITSTQEGDSASENKK. The segment covering 810-821 has biased composition (polar residues); the sequence is PQITSTQEGDSA. An ABC transporter 2 domain is found at 838 to 1090; it reads ITFDEVVYSV…HLIKYFESIP (253 aa). 883-890 provides a ligand contact to ATP; that stretch reads GVSGAGKT. Residues 1163 to 1377 form the ABC transmembrane type-2 2 domain; sequence TQCMACLWKQ…TLYGLVASQF (215 aa). The next 7 membrane-spanning stretches (helical) occupy residues 1184–1204, 1214–1234, 1270–1290, 1301–1321, 1327–1347, 1358–1378, and 1408–1428; these read AVRL…FWDI, LVNA…QNSS, IPYI…MIGF, FFFM…TVAV, VASI…GFIV, WYYW…SQFG, and VVAA…ALGI.

This sequence belongs to the ABC transporter superfamily. ABCG family. PDR (TC 3.A.1.205) subfamily. As to expression, roots, petals and leaf epidermis, where it is confined to glandular trichomes (at protein level).

Its subcellular location is the cell membrane. Its function is as follows. Excretes secondary metabolites such as terpenes. Involved in both constitutive and jasmonic acid-dependent induced defense. Confers some resistance to sclareol and B.cinerea. The sequence is that of Pleiotropic drug resistance protein 1 (PDR1) from Nicotiana plumbaginifolia (Leadwort-leaved tobacco).